The sequence spans 144 residues: Large ribosomal subunit protein uL16 (144 aa).

Belongs to the universal ribosomal protein uL16 family. Part of the 50S ribosomal subunit.

Its function is as follows. Binds 23S rRNA and is also seen to make contacts with the A and possibly P site tRNAs. The chain is Large ribosomal subunit protein uL16 from Bacillus anthracis (strain A0248).